The primary structure comprises 828 residues: Zinc finger protein 438 (828 aa).

Disordered regions lie at residues 1–29, 143–173, and 193–231; these read MQNS…KGLQ, KSGC…LYKP, and ALTN…PAKQ. Polar residues-rich tracts occupy residues 16-29 and 150-159; these read NIPS…KGLQ and PAQTQMCPQM. 3 C2H2-type zinc fingers span residues 507–529, 535–557, and 567–590; these read HRCH…MNTH, YSCR…MKLH, and MCCE…KEVH. The segment at 680-721 is disordered; sequence EGTFPGSKGTQEELVQHASPDWKRHPERGKPEKVHSSSEESH. Basic and acidic residues predominate over residues 689 to 721; the sequence is TQEELVQHASPDWKRHPERGKPEKVHSSSEESH. The segment at 776 to 799 adopts a C2H2-type 4 zinc-finger fold; that stretch reads FNCLLCAEMLGRKEDLLHHWKHQH.

The protein belongs to the krueppel C2H2-type zinc-finger protein family. As to expression, ubiquitous.

It is found in the nucleus. Functionally, isoform 1 acts as a transcriptional repressor. This chain is Zinc finger protein 438 (ZNF438), found in Homo sapiens (Human).